Reading from the N-terminus, the 269-residue chain is Cytolethal distending toxin subunit B (269 aa).

Positions M1–A18 are cleaved as a signal peptide. Positions R195–R210 match the Nuclear localization signal motif.

In terms of assembly, heterotrimer of 3 subunits, CdtA, CdtB and CdtC.

Its subcellular location is the secreted. Part of the tripartite complex that is required for the CDT activity. CdtB exhibits a DNA-nicking endonuclease activity, and very probably causes DNA damage in intoxicated cells. This damage induces G2/M cell cycle arrest, chromatin fragmentation, cell distention and nucleus enlargement. The chain is Cytolethal distending toxin subunit B (cdtB) from Escherichia coli.